The primary structure comprises 317 residues: Polysulfide reductase chain C (317 aa).

8 consecutive transmembrane segments (helical) span residues 20–40 (IAVYLFLAGLSAGAIISAIII), 54–75 (IIKAGALIAPLTIGAGLLLLIF), 98–118 (LGVLALFAYFPVVLIFLLGVF), 147–167 (IVTFVLAIGVGAYTGFLLSAM), 182–202 (FLASGISAGISGNLLIGLLFF), 221–237 (VILFEAFLLFILFVGMY), 259–279 (LFWLGVAGMGLALPVVLNVAL), and 289–309 (FVMLNALIVLAGVMALRFYIL).

The protein belongs to the NrfD family. Functional polysulfide reductase is made up of three different (A, B, and C) subunits.

The protein resides in the cell inner membrane. Its function is as follows. Could possibly serve as the membrane anchor of the enzyme. In terms of biological role, component of the phosphorylative electron transport system with polysulfide as the terminal acceptor. The protein is Polysulfide reductase chain C (psrC) of Wolinella succinogenes (strain ATCC 29543 / DSM 1740 / CCUG 13145 / JCM 31913 / LMG 7466 / NCTC 11488 / FDC 602W) (Vibrio succinogenes).